A 414-amino-acid polypeptide reads, in one-letter code: Hydroxysqualene dehydroxylase (414 aa).

The protein belongs to the HpnE family.

The catalysed reaction is squalene + FAD + H2O + H(+) = hydroxysqualene + FADH2. It functions in the pathway secondary metabolite biosynthesis; hopanoid biosynthesis. Its function is as follows. Involved in the biosynthesis of the hopanoid precursor squalene (SQ) from farnesyl diphosphate (FPP). Catalyzes the third (last) step, the reduction of hydroxysqualene (HSQ) to SQ. The polypeptide is Hydroxysqualene dehydroxylase (Zymomonas mobilis subsp. mobilis (strain ATCC 31821 / ZM4 / CP4)).